The sequence spans 376 residues: NAD(P)H-quinone oxidoreductase subunit 1, chloroplastic (376 aa).

Helical transmembrane passes span 27 to 47 (LISIFLPIVLLLVISVLGVLV), 65 to 85 (PEYAGSLGIMQAIVDGVKLLI), 97 to 117 (WLFSIGPVLVVTPVILSYLVV), 130 to 150 (LGIFFWIVISSITPLGLLIAG), 166 to 186 (AAQSISYEIPLTLCVLSISLL), 251 to 271 (GIKFGIFYVASYLNLLVSSLF), 272 to 292 (AVVLYLGGWNFPIPTTLIFFI), 310 to 330 (LIIPIIHISITLAKTYLFIFF), and 353 to 373 (FLLPMAVGNLLLTASFQLTLF).

This sequence belongs to the complex I subunit 1 family. As to quaternary structure, NDH is composed of at least 16 different subunits, 5 of which are encoded in the nucleus.

Its subcellular location is the plastid. The protein localises to the chloroplast thylakoid membrane. It catalyses the reaction a plastoquinone + NADH + (n+1) H(+)(in) = a plastoquinol + NAD(+) + n H(+)(out). It carries out the reaction a plastoquinone + NADPH + (n+1) H(+)(in) = a plastoquinol + NADP(+) + n H(+)(out). NDH shuttles electrons from NAD(P)H:plastoquinone, via FMN and iron-sulfur (Fe-S) centers, to quinones in the photosynthetic chain and possibly in a chloroplast respiratory chain. The immediate electron acceptor for the enzyme in this species is believed to be plastoquinone. Couples the redox reaction to proton translocation, and thus conserves the redox energy in a proton gradient. The sequence is that of NAD(P)H-quinone oxidoreductase subunit 1, chloroplastic from Chara vulgaris (Common stonewort).